The primary structure comprises 302 residues: S-crystallin SL4 (302 aa).

Tandem repeats lie at residues 45–54 (GGYAVQSRGD), 55–64 (GGYYVKSRGD), and 65–74 (GGYPVQGRGD). The tract at residues 45 to 84 (GGYAVQSRGDGGYYVKSRGDGGYPVQGRGDTGYSSQTRSD) is 4 X approximate tandem repeats of G-G-Y-[AYP]-V-[QK]-[SG]-R-G-D. 3 short sequence motifs (cell attachment site) span residues 52 to 54 (RGD), 62 to 64 (RGD), and 72 to 74 (RGD). A disordered region spans residues 68–92 (PVQGRGDTGYSSQTRSDDACLGQGR). The 4; approximate repeat unit spans residues 75-84 (TGYSSQTRSD). Residues 113 to 115 (RGD) carry the Cell attachment site motif. The tract at residues 118-205 (SDINSGLYSG…ESASRRSRNH (88 aa)) is disordered. Composition is skewed to basic and acidic residues over residues 129–166 (RMDD…HYRS) and 177–192 (AEDR…RIDI). Positions 183-302 (GHSDSHRIDI…YIKRRYQSDF (120 aa)) constitute a GST C-terminal domain.

It belongs to the GST superfamily.

S-crystallins are structural components of squids and octopi eye lens. This Nototodarus sloanii (Wellington flying squid) protein is S-crystallin SL4.